Reading from the N-terminus, the 85-residue chain is Beta-insect depressant toxin BjIT2 (85 aa).

Residues 1 to 21 form the signal peptide; the sequence is MKLLLLLVISASMLLECLVNA. The LCN-type CS-alpha/beta domain occupies 22–82; the sequence is DGYIRKKDGC…TWKSSTNTCG (61 aa). Intrachain disulfides connect Cys31/Cys81, Cys35/Cys56, Cys42/Cys63, and Cys46/Cys65. A propeptide spans 83-85 (removed by a carboxypeptidase); sequence RKK.

It belongs to the long (4 C-C) scorpion toxin superfamily. Sodium channel inhibitor family. Beta subfamily. Post-translationally, C-terminal basic residues are removed by a carboxypeptidase. Expressed by the venom gland.

It is found in the secreted. Functionally, depressant insect beta-toxins cause a transient contraction paralysis followed by a slow flaccid paralysis. They bind voltage-independently at site-4 of sodium channels (Nav) and shift the voltage of activation toward more negative potentials thereby affecting sodium channel activation and promoting spontaneous and repetitive firing. This toxin is active only on insects. The chain is Beta-insect depressant toxin BjIT2 from Hottentotta judaicus (Black scorpion).